A 331-amino-acid chain; its full sequence is Glycerol-3-phosphate dehydrogenase [NAD(P)+] (331 aa).

NADPH is bound by residues Trp-14, Arg-34, and Lys-107. Sn-glycerol 3-phosphate contacts are provided by Lys-107, Gly-135, and Ser-137. Position 139 (Ala-139) interacts with NADPH. Residues Lys-190, Asp-243, Ser-253, Arg-254, and Asn-255 each contribute to the sn-glycerol 3-phosphate site. The active-site Proton acceptor is Lys-190. Arg-254 provides a ligand contact to NADPH. NADPH-binding residues include Val-278 and Glu-280.

It belongs to the NAD-dependent glycerol-3-phosphate dehydrogenase family.

It localises to the cytoplasm. It carries out the reaction sn-glycerol 3-phosphate + NAD(+) = dihydroxyacetone phosphate + NADH + H(+). The enzyme catalyses sn-glycerol 3-phosphate + NADP(+) = dihydroxyacetone phosphate + NADPH + H(+). Its pathway is membrane lipid metabolism; glycerophospholipid metabolism. Functionally, catalyzes the reduction of the glycolytic intermediate dihydroxyacetone phosphate (DHAP) to sn-glycerol 3-phosphate (G3P), the key precursor for phospholipid synthesis. In Caulobacter vibrioides (strain ATCC 19089 / CIP 103742 / CB 15) (Caulobacter crescentus), this protein is Glycerol-3-phosphate dehydrogenase [NAD(P)+].